The primary structure comprises 217 residues: 3-demethoxyubiquinol 3-hydroxylase (217 aa).

E66, E96, H99, E148, E180, and H183 together coordinate Fe cation.

Belongs to the COQ7 family. Fe cation is required as a cofactor.

The protein localises to the cell membrane. The catalysed reaction is a 5-methoxy-2-methyl-3-(all-trans-polyprenyl)benzene-1,4-diol + AH2 + O2 = a 3-demethylubiquinol + A + H2O. Its pathway is cofactor biosynthesis; ubiquinone biosynthesis. In terms of biological role, catalyzes the hydroxylation of 2-nonaprenyl-3-methyl-6-methoxy-1,4-benzoquinol during ubiquinone biosynthesis. This Xanthomonas axonopodis pv. citri (strain 306) protein is 3-demethoxyubiquinol 3-hydroxylase.